Consider the following 146-residue polypeptide: Large ribosomal subunit protein uL15 (146 aa).

The tract at residues 1–56 (MSDIQLNTLKPAEGSKHAKRRVGRGIGSGLGKTAGRGHKGQKSRSGGFHKVGFEGG) is disordered. Residues 24–34 (RGIGSGLGKTA) are compositionally biased toward gly residues.

The protein belongs to the universal ribosomal protein uL15 family. In terms of assembly, part of the 50S ribosomal subunit.

Binds to the 23S rRNA. This chain is Large ribosomal subunit protein uL15, found in Bordetella bronchiseptica (strain ATCC BAA-588 / NCTC 13252 / RB50) (Alcaligenes bronchisepticus).